The chain runs to 386 residues: MHGRRHLAASLTRALTQAPSRSISSTPSLLQTLDPSVPSPSPPPAAEPGRLAELRRRLQADAPSLGDFAYSVEVGTRQRPLPKPKWMKETVPGGAKYAAIKAKLRELKLHTVCEEARCPNLGECWSGGETGTATATIMILGDTCTRGCRFCNVKTSRTPPPPDPDEPSNVAQAIASWGLEYIVITSVDRDDLPDQGSGHFAETVQKLKALKPEMLIEALVPDFRGDPSCVEKVATSGLHVFAHNIETVEELQRNVRDYRANFKQSIDVLKMAKEYAPPGTLTKTSIMLGCGETPDQVISTMEKVRAAGVDVITFGQYMRPSKRHMPVSEYVTPEAFEKYRALGVEMGFRYVASGPMVRSSYKAGEFYIKAMIEADRSKATTADSSA.

Positions 1–48 are disordered; it reads MHGRRHLAASLTRALTQAPSRSISSTPSLLQTLDPSVPSPSPPPAAEP. Residues 13–34 are compositionally biased toward polar residues; it reads RALTQAPSRSISSTPSLLQTLD. The span at 37-46 shows a compositional bias: pro residues; it reads VPSPSPPPAA. 7 residues coordinate [4Fe-4S] cluster: cysteine 113, cysteine 118, cysteine 124, cysteine 144, cysteine 148, cysteine 151, and serine 360. A Radical SAM core domain is found at 129–349; it reads ETGTATATIM…RALGVEMGFR (221 aa).

This sequence belongs to the radical SAM superfamily. Lipoyl synthase family. [4Fe-4S] cluster serves as cofactor.

It localises to the mitochondrion. It carries out the reaction [[Fe-S] cluster scaffold protein carrying a second [4Fe-4S](2+) cluster] + N(6)-octanoyl-L-lysyl-[protein] + 2 oxidized [2Fe-2S]-[ferredoxin] + 2 S-adenosyl-L-methionine + 4 H(+) = [[Fe-S] cluster scaffold protein] + N(6)-[(R)-dihydrolipoyl]-L-lysyl-[protein] + 4 Fe(3+) + 2 hydrogen sulfide + 2 5'-deoxyadenosine + 2 L-methionine + 2 reduced [2Fe-2S]-[ferredoxin]. The protein operates within protein modification; protein lipoylation via endogenous pathway; protein N(6)-(lipoyl)lysine from octanoyl-[acyl-carrier-protein]: step 2/2. Its function is as follows. Catalyzes the radical-mediated insertion of two sulfur atoms into the C-6 and C-8 positions of the octanoyl moiety bound to the lipoyl domains of lipoate-dependent enzymes, thereby converting the octanoylated domains into lipoylated derivatives. In Sorghum bicolor (Sorghum), this protein is Lipoyl synthase, mitochondrial.